We begin with the raw amino-acid sequence, 195 residues long: MAASMDEDITANPPPSSEEDPLAEERLGFVREVGAQAVWSLSSCKPGFGVERLRDNIMDTYWQSDGQLPHLVNIQFHKRTNISQIYIYTDYKLDESYTPSRISIRSGTNFNDLQELQVMDLTEPTGWVQIPIKDGNVKSIRTFMLQIAVISNHQNGRDTHMRQIRIHAPVEGKHYPLELFGKFGTVDFQKFATIR.

The tract at residues 1–21 (MAASMDEDITANPPPSSEEDP) is disordered. The DOC domain maps to 9-193 (ITANPPPSSE…GTVDFQKFAT (185 aa)).

It belongs to the APC10 family. In terms of assembly, the APC is composed of at least 11 subunits.

Functionally, component of the anaphase promoting complex/cyclosome (APC/C), a cell cycle-regulated ubiquitin ligase that controls progression through mitosis and the G1 phase of the cell cycle. This Drosophila melanogaster (Fruit fly) protein is Anaphase-promoting complex subunit 10 (APC10).